Here is a 335-residue protein sequence, read N- to C-terminus: Carboxylesterase 1 (335 aa).

The Involved in the stabilization of the negatively charged intermediate by the formation of the oxyanion hole signature appears at 90 to 92 (HGG). Paraoxon-binding positions include 92–93 (GG), S169, and A170. The active site involves S169. Residues D276 and H306 contribute to the active site.

This sequence belongs to the 'GDXG' lipolytic enzyme family.

The catalysed reaction is a carboxylic ester + H2O = an alcohol + a carboxylate + H(+). Its activity is regulated as follows. Is inhibited by the organophosphates paraoxon and dimethylchlorophosphate (DMCP). Carboxylesterase acting on esters with varying acyl chain length. This is Carboxylesterase 1 (CXE1) from Actinidia eriantha (Velvet vine).